Consider the following 350-residue polypeptide: ATPase GET3 (350 aa).

Residue 26-33 participates in ATP binding; sequence KGGVGKTT. Aspartate 57 is an active-site residue. 2 residues coordinate ATP: glutamate 243 and asparagine 270. Zn(2+) is bound by residues cysteine 282 and cysteine 285.

It belongs to the arsA ATPase family. In terms of assembly, homodimer. Component of the Golgi to ER traffic (GET) complex, which is composed of GET1, GET2 and GET3. Within the complex, GET1 and GET2 form a heterotetramer which is stabilized by phosphatidylinositol binding and which binds to the GET3 homodimer. Interacts with the chloride channel protein GEF1.

The protein localises to the cytoplasm. It localises to the endoplasmic reticulum. Its subcellular location is the golgi apparatus. Functionally, ATPase required for the post-translational delivery of tail-anchored (TA) proteins to the endoplasmic reticulum. Recognizes and selectively binds the transmembrane domain of TA proteins in the cytosol. This complex then targets to the endoplasmic reticulum by membrane-bound receptors GET1 and GET2, where the tail-anchored protein is released for insertion. This process is regulated by ATP binding and hydrolysis. ATP binding drives the homodimer towards the closed dimer state, facilitating recognition of newly synthesized TA membrane proteins. ATP hydrolysis is required for insertion. Subsequently, the homodimer reverts towards the open dimer state, lowering its affinity for the GET1-GET2 receptor, and returning it to the cytosol to initiate a new round of targeting. Cooperates with the HDEL receptor ERD2 to mediate the ATP-dependent retrieval of resident ER proteins that contain a C-terminal H-D-E-L retention signal from the Golgi to the ER. Involved in low-level resistance to the oxyanions arsenite and arsenate, and in heat tolerance. This Candida albicans (strain SC5314 / ATCC MYA-2876) (Yeast) protein is ATPase GET3.